The sequence spans 228 residues: PKHD-type hydroxylase Reut_A2877 (228 aa).

A Fe2OG dioxygenase domain is found at isoleucine 80–serine 180. 3 residues coordinate Fe cation: histidine 98, aspartate 100, and histidine 161. Residue arginine 171 coordinates 2-oxoglutarate.

Fe(2+) serves as cofactor. It depends on L-ascorbate as a cofactor.

This is PKHD-type hydroxylase Reut_A2877 from Cupriavidus pinatubonensis (strain JMP 134 / LMG 1197) (Cupriavidus necator (strain JMP 134)).